The following is a 350-amino-acid chain: MSEVQLRNNWKREEIESLFALPMNDLLFQAHSIHRQEFDPNEVQISRLLSIKTGACPEDCKYCPQSARYDTGLEKERLLAMETVLTEARSAKAAGASRFCMGAAWRNPKERDMPYLKTMVEEVKALGMETCMTLGMLSAEQANTLADAGLDYYNHNLDTSPEYYGDVITTRTYQSRLDTLSNVRASGMKVCSGGIVGMGEKATDRAGLIQQLANLDQHPDSVPINMLVKVEGTPFEKLDDLDPLEFVRTIAVARITMPKSRVRLSAGRENMSDELQAMCFFAGANSIFYGCKLLTTPNPEENDDMGLFRRLGLHPEQGVASTKEQDEAMLAKAAAQQDKKVSAFYDAGAL.

The region spanning 41–268 is the Radical SAM core domain; sequence NEVQISRLLS…KSRVRLSAGR (228 aa). The [4Fe-4S] cluster site is built by Cys-56, Cys-60, and Cys-63. Cys-100, Cys-131, Cys-191, and Arg-263 together coordinate [2Fe-2S] cluster.

It belongs to the radical SAM superfamily. Biotin synthase family. Homodimer. The cofactor is [4Fe-4S] cluster. Requires [2Fe-2S] cluster as cofactor.

It catalyses the reaction (4R,5S)-dethiobiotin + (sulfur carrier)-SH + 2 reduced [2Fe-2S]-[ferredoxin] + 2 S-adenosyl-L-methionine = (sulfur carrier)-H + biotin + 2 5'-deoxyadenosine + 2 L-methionine + 2 oxidized [2Fe-2S]-[ferredoxin]. The protein operates within cofactor biosynthesis; biotin biosynthesis; biotin from 7,8-diaminononanoate: step 2/2. Functionally, catalyzes the conversion of dethiobiotin (DTB) to biotin by the insertion of a sulfur atom into dethiobiotin via a radical-based mechanism. The polypeptide is Biotin synthase (Shewanella halifaxensis (strain HAW-EB4)).